The primary structure comprises 450 residues: Glucose-6-phosphate isomerase (450 aa).

Glu291 functions as the Proton donor in the catalytic mechanism. Residues His312 and Lys426 contribute to the active site.

Belongs to the GPI family.

Its subcellular location is the cytoplasm. The catalysed reaction is alpha-D-glucose 6-phosphate = beta-D-fructose 6-phosphate. The protein operates within carbohydrate biosynthesis; gluconeogenesis. It functions in the pathway carbohydrate degradation; glycolysis; D-glyceraldehyde 3-phosphate and glycerone phosphate from D-glucose: step 2/4. In terms of biological role, catalyzes the reversible isomerization of glucose-6-phosphate to fructose-6-phosphate. The chain is Glucose-6-phosphate isomerase from Clostridium botulinum (strain Langeland / NCTC 10281 / Type F).